Consider the following 89-residue polypeptide: Small ribosomal subunit protein uS15 (89 aa).

Belongs to the universal ribosomal protein uS15 family. In terms of assembly, part of the 30S ribosomal subunit. Forms a bridge to the 50S subunit in the 70S ribosome, contacting the 23S rRNA.

Its function is as follows. One of the primary rRNA binding proteins, it binds directly to 16S rRNA where it helps nucleate assembly of the platform of the 30S subunit by binding and bridging several RNA helices of the 16S rRNA. Forms an intersubunit bridge (bridge B4) with the 23S rRNA of the 50S subunit in the ribosome. The polypeptide is Small ribosomal subunit protein uS15 (Photorhabdus laumondii subsp. laumondii (strain DSM 15139 / CIP 105565 / TT01) (Photorhabdus luminescens subsp. laumondii)).